An 855-amino-acid polypeptide reads, in one-letter code: MAEGGFTHNQQWIGPEEAEELLDFDIAVQMNEEGPLNPGVNPFRVPGITSQEKDDYCKILQTKLQELKNEVKEVKIEEGNAGKFRRARYLRYSDENVLSIVYLLIGYLRYLIDHRSLGSLRHDIDIETPQEEHYNNSEKGTTLNIKYGRRCCISTFIMYLILFAGVGIWLGARAQVVWRLPPLVVPVDDTEIIFWDCWAPEEPACQDFLGTMIYLKANVNISIQEGPTLGNWAREIWSTLFKKATRQCRRGRIWRRWNETITGPLGCANNTCYNISVVVPDYQCYVDRVDTWLQGKVNISLCLTGGKMLYNKETRQLSYCTDPLQIPLINYTFGPNQTCMWNTSLIKDSEIPKCGWWNQVAYYDTCKWEEANVTFQCHRTQSQSGSWIRTISSWKQRNRWEWRPDFESEKVKISLQCNSTKNLTFAMRSSSDYYDVQGAWIEFGCHRNKSKRHSEARFRIRCKWNEGNNISLIDTCGTNPNVTGANPVDCTMKANTMYNCSLQDSFTMKIEDLIVHFNMTKAVELYNIAGNWSCTSDLPKGWGYMNCNCTNGTDNSETKMACPKNQGILRNWYNPVAGLRQALIKYQVVKQPEYLIVPEEVMQYKFKQKRAAIHIMLALATVLSMAGAGTGATAIGMVTQYHQVLATHQQALEKITEALKINNLRLITLEHQVLVIGLRVEAIEKFLYTAFAMQELGCNQNQFFCKIPPSLWSMYNMTLNQTIWNHGNISLGNWYNQTRDLQNKFYEIIMDIEQNNVQGKTGIQQLQKWENWVGWIGKIPQYLKGLLGSVLGIGLGILLLLICLPTLVDCIRNCTNKILGYTVIAMPEIDDEEVHLSVELRRNGRQCGISEKEEE.

Topologically, residues 1–784 are extracellular; it reads MAEGGFTHNQ…WIGKIPQYLK (784 aa). N-linked (GlcNAc...) asparagine; by host glycosylation is found at asparagine 135, asparagine 220, asparagine 258, asparagine 269, asparagine 274, asparagine 298, asparagine 330, asparagine 336, asparagine 342, asparagine 372, asparagine 418, asparagine 422, asparagine 448, asparagine 469, asparagine 481, asparagine 499, asparagine 518, asparagine 531, asparagine 548, and asparagine 551. Residues 615-635 are fusion peptide; it reads IMLALATVLSMAGAGTGATAI. Residues 642-692 are a coiled coil; sequence HQVLATHQQALEKITEALKINNLRLITLEHQVLVIGLRVEAIEKFLYTAFA. The tract at residues 661-679 is immunosuppression; the sequence is INNLRLITLEHQVLVIGLR. N-linked (GlcNAc...) asparagine; by host glycans are attached at residues asparagine 716, asparagine 720, asparagine 728, and asparagine 736. Positions 735–771 form a coiled coil; it reads YNQTRDLQNKFYEIIMDIEQNNVQGKTGIQQLQKWEN. The helical transmembrane segment at 785 to 805 threads the bilayer; that stretch reads GLLGSVLGIGLGILLLLICLP. Residues 806 to 855 lie on the Cytoplasmic side of the membrane; the sequence is TLVDCIRNCTNKILGYTVIAMPEIDDEEVHLSVELRRNGRQCGISEKEEE.

The mature envelope protein (Env) consists of a trimer of SU-TM heterodimers attached by noncovalent interactions or by a labile interchain disulfide bond. Post-translationally, specific enzymatic cleavages in vivo yield mature proteins. Envelope glycoproteins are synthesized as an inactive precursor that is N-glycosylated and processed likely by host cell furin or by a furin-like protease in the Golgi to yield the mature SU and TM proteins. The cleavage site between SU and TM requires the minimal sequence [KR]-X-[KR]-R.

The protein resides in the virion membrane. It localises to the host cell membrane. The surface protein (SU) attaches the virus to the host cell by binding to its receptor. This interaction triggers the refolding of the transmembrane protein (TM) and is thought to activate its fusogenic potential by unmasking its fusion peptide. Fusion occurs at the host cell plasma membrane. Its function is as follows. The transmembrane protein (TM) acts as a class I viral fusion protein. Under the current model, the protein has at least 3 conformational states: pre-fusion native state, pre-hairpin intermediate state, and post-fusion hairpin state. During viral and target cell membrane fusion, the coiled coil regions (heptad repeats) assume a trimer-of-hairpins structure, positioning the fusion peptide in close proximity to the C-terminal region of the ectodomain. The formation of this structure appears to drive apposition and subsequent fusion of viral and target cell membranes. Membranes fusion leads to delivery of the nucleocapsid into the cytoplasm. This is Envelope glycoprotein gp150 (env) from Feline immunodeficiency virus (isolate TM2) (FIV).